The chain runs to 535 residues: Alpha-1,3-mannosyl-glycoprotein 4-beta-N-acetylglucosaminyltransferase A (535 aa).

Residues 1–4 (MRLR) lie on the Cytoplasmic side of the membrane. Residues 5–27 (NGTVATALAFITSFLTLSWYTTW) form a helical; Signal-anchor for type II membrane protein membrane-spanning segment. A coiled-coil region spans residues 28-63 (QNGKEKLIAYQREFLALKERLRIAEHRISQRSSELN). The Lumenal portion of the chain corresponds to 28 to 535 (QNGKEKLIAY…NEIHIKKATN (508 aa)). 2 N-linked (GlcNAc...) asparagine glycosylation sites follow: asparagine 77 and asparagine 458. The residue at position 474 (serine 474) is a Phosphoserine.

Belongs to the glycosyltransferase 54 family. A divalent metal cation is required as a cofactor. N-glycosylated.

It is found in the golgi apparatus membrane. Its subcellular location is the secreted. The catalysed reaction is N(4)-{beta-D-GlcNAc-(1-&gt;2)-alpha-D-Man-(1-&gt;3)-[beta-D-GlcNAc-(1-&gt;2)-alpha-D-Man-(1-&gt;6)]-beta-D-Man-(1-&gt;4)-beta-D-GlcNAc-(1-&gt;4)-beta-D-GlcNAc}-L-asparaginyl-[protein] + UDP-N-acetyl-alpha-D-glucosamine = N(4)-{beta-D-GlcNAc-(1-&gt;2)-[beta-D-GlcNAc-(1-&gt;4)]-alpha-D-Man-(1-&gt;3)-[beta-D-GlcNAc-(1-&gt;2)-alpha-D-Man-(1-&gt;6)]-beta-D-Man-(1-&gt;4)-beta-D-GlcNAc-(1-&gt;4)-beta-D-GlcNAc}-L-asparaginyl-[protein] + UDP + H(+). The enzyme catalyses an N(4)-{beta-D-GlcNAc-(1-&gt;2)-alpha-D-Man-(1-&gt;3)-[alpha-D-Man-(1-&gt;6)]-beta-D-Man-(1-&gt;4)-beta-D-GlcNAc-(1-&gt;4)-beta-D-GlcNAc}-L-asparaginyl-[protein] + UDP-N-acetyl-alpha-D-glucosamine = an N(4)-{beta-D-GlcNAc-(1-&gt;2)-[beta-D-GlcNAc-(1-&gt;4)]-alpha-D-Man-(1-&gt;3)-[alpha-D-Man-(1-&gt;6)]-beta-D-Man-(1-&gt;4)-beta-D-GlcNAc-(1-&gt;4)-beta-D-GlcNAc}-L-asparaginyl-[protein] + UDP + H(+). It catalyses the reaction an N(4)-{beta-D-GlcNAc-(1-&gt;2)-alpha-D-Man-(1-&gt;3)-[beta-D-GlcNAc-(1-&gt;2)-[beta-D-GlcNAc-(1-&gt;6)]-alpha-D-Man-(1-&gt;6)]-beta-D-Man-(1-&gt;4)-beta-D-GlcNAc-(1-&gt;4)-beta-D-GlcNAc}-L-asparaginyl-[protein] + UDP-N-acetyl-alpha-D-glucosamine = an N(4)-{beta-D-GlcNAc-(1-&gt;2)-[beta-D-GlcNAc-(1-&gt;4)]-alpha-D-Man-(1-&gt;3)-[beta-D-GlcNAc-(1-&gt;2)-[beta-D-GlcNAc-(1-&gt;6)]-alpha-D-Man-(1-&gt;6)]-beta-D-Man-(1-&gt;4)-beta-D-GlcNAc-(1-&gt;4)-beta-D-GlcNAc}-L-asparaginyl-[protein] + UDP + H(+). It carries out the reaction an N(4)-{beta-D-GlcNAc-(1-&gt;2)-alpha-D-Man-(1-&gt;3)-[beta-D-GlcNAc-(1-&gt;2)-alpha-D-Man-(1-&gt;6)]-beta-D-Man-(1-&gt;4)-beta-D-GlcNAc-(1-&gt;4)-[alpha-L-Fuc-(1-&gt;6)]-beta-D-GlcNAc}-L-asparaginyl-[protein] + UDP-N-acetyl-alpha-D-glucosamine = N(4)-{beta-D-GlcNAc-(1-&gt;2)-[beta-D-GlcNAc-(1-&gt;4)]-alpha-D-Man-(1-&gt;3)-[beta-D-GlcNAc-(1-&gt;2)-alpha-D-Man-(1-&gt;6)]-beta-D-Man-(1-&gt;4)-beta-D-GlcNAc-(1-&gt;4)-[alpha-L-Fuc-(1-&gt;6)]-beta-D-GlcNAc}-asparaginyl-[protein] + UDP + H(+). The catalysed reaction is an N(4)-{beta-D-GlcNAc-(1-&gt;2)-alpha-D-Man-(1-&gt;3)-[beta-D-Gal-(1-&gt;4)-beta-D-GlcNAc-(1-&gt;2)-alpha-D-Man-(1-&gt;6)]-beta-D-Man-(1-&gt;4)-beta-D-GlcNAc-(1-&gt;4)-beta-D-GlcNAc}-L-asparaginyl-[protein] + UDP-N-acetyl-alpha-D-glucosamine = an N(4)-{beta-D-GlcNAc-(1-&gt;2)-[beta-D-GlcNAc-(1-&gt;4)]-alpha-D-Man-(1-&gt;3)-[beta-D-Gal-(1-&gt;4)-beta-D-GlcNAc-(1-&gt;2)-alpha-D-Man-(1-&gt;6)]-beta-D-Man-(1-&gt;4)-beta-D-GlcNAc-(1-&gt;4)-beta-D-GlcNAc}-L-asparaginyl-[protein] + UDP + H(+). The enzyme catalyses N(4)-{beta-D-GlcNAc-(1-&gt;2)-alpha-D-Man-(1-&gt;3)-[alpha-D-Man-(1-&gt;3)-{alpha-D-Man-(1-&gt;6)}-alpha-D-Man-(1-&gt;6)]-beta-D-Man-(1-&gt;4)-beta-D-GlcNAc-(1-&gt;4)-beta-D-GlcNAc}-asparaginyl-[protein] + UDP-N-acetyl-alpha-D-glucosamine = N(4)-{beta-D-GlcNAc-(1-&gt;2)-[beta-D-GlcNAc-(1-&gt;4)]-alpha-D-Man-(1-&gt;3)-[alpha-D-Man-(1-&gt;3)-{alpha-D-Man-(1-&gt;6)}-alpha-D-Man-(1-&gt;6)]-beta-D-Man-(1-&gt;4)-beta-D-GlcNAc-(1-&gt;4)-beta-D-GlcNAc}-asparaginyl-[protein] + UDP + H(+). It catalyses the reaction N(4)-{beta-D-GlcNAc-(1-&gt;2)-alpha-D-Man-(1-&gt;3)-beta-D-Man-(1-&gt;4)-beta-D-GlcNAc-(1-&gt;4)-beta-D-GlcNAc}-asparaginyl-[protein] + UDP-N-acetyl-alpha-D-glucosamine = N(4)-{beta-D-GlcNAc-(1-&gt;2)-[beta-D-GlcNAc-(1-&gt;4)]-alpha-D-Man-(1-&gt;3)-beta-D-Man-(1-&gt;4)-beta-D-GlcNAc-(1-&gt;4)-beta-D-GlcNAc}-asparaginyl-[protein] + UDP + H(+). The protein operates within protein modification; protein glycosylation. Inhibited by UDP. Its function is as follows. Glycosyltransferase that catalyze the transfer of GlcNAc from UDP-GlcNAc to the GlcNAcbeta1-2Manalpha1-3 arm of the core structure of N-linked glycans through a beta1-4 linkage and participates in the production of tri- and tetra-antennary N-linked sugar chains. Involved in glucose transport by mediating SLC2A2/GLUT2 glycosylation, thereby controlling cell-surface expression of SLC2A2 in pancreatic beta cells. This is Alpha-1,3-mannosyl-glycoprotein 4-beta-N-acetylglucosaminyltransferase A from Pongo abelii (Sumatran orangutan).